A 449-amino-acid polypeptide reads, in one-letter code: Tubulin alpha-1C chain (449 aa).

Residues 1–4 (MREC) carry the MREC motif motif. Residue Gln11 coordinates GTP. Lys40 bears the N6-acetyllysine mark. GTP-binding residues include Glu71, Ser140, Gly144, Thr145, Thr179, Asn206, and Asn228. Glu71 is a Mg(2+) binding site. Glu254 is a catalytic residue. Position 282 is a 3'-nitrotyrosine (Tyr282). Tyr432 is modified (phosphotyrosine). The residue at position 439 (Ser439) is a Phosphoserine. Tyr449 is subject to 3'-nitrotyrosine.

Belongs to the tubulin family. Dimer of alpha and beta chains. A typical microtubule is a hollow water-filled tube with an outer diameter of 25 nm and an inner diameter of 15 nM. Alpha-beta heterodimers associate head-to-tail to form protofilaments running lengthwise along the microtubule wall with the beta-tubulin subunit facing the microtubule plus end conferring a structural polarity. Microtubules usually have 13 protofilaments but different protofilament numbers can be found in some organisms and specialized cells. Mg(2+) is required as a cofactor. In terms of processing, some glutamate residues at the C-terminus are polyglycylated, resulting in polyglycine chains on the gamma-carboxyl group. Glycylation is mainly limited to tubulin incorporated into axonemes (cilia and flagella) whereas glutamylation is prevalent in neuronal cells, centrioles, axonemes, and the mitotic spindle. Both modifications can coexist on the same protein on adjacent residues, and lowering polyglycylation levels increases polyglutamylation, and reciprocally. Cilia and flagella glycylation is required for their stability and maintenance. Flagella glycylation controls sperm motility. Some glutamate residues at the C-terminus are polyglutamylated, resulting in polyglutamate chains on the gamma-carboxyl group. Polyglutamylation plays a key role in microtubule severing by spastin (SPAST). SPAST preferentially recognizes and acts on microtubules decorated with short polyglutamate tails: severing activity by SPAST increases as the number of glutamates per tubulin rises from one to eight, but decreases beyond this glutamylation threshold. Glutamylation is also involved in cilia motility. Post-translationally, acetylation of alpha chains at Lys-40 is located inside the microtubule lumen. This modification has been correlated with increased microtubule stability, intracellular transport and ciliary assembly. In terms of processing, methylation of alpha chains at Lys-40 is found in mitotic microtubules and is required for normal mitosis and cytokinesis contributing to genomic stability. Nitration of Tyr-449 is irreversible and interferes with normal dynein intracellular distribution. Post-translationally, undergoes a tyrosination/detyrosination cycle, the cyclic removal and re-addition of a C-terminal tyrosine residue by the enzymes tubulin tyrosine carboxypeptidase (MATCAP1, VASH1 or VASH2) and tubulin tyrosine ligase (TTL), respectively. In terms of processing, tyrosination promotes microtubule interaction with CAP-Gly domain-containing proteins such as CLIP1, CLIP2 and DCTN1. Tyrosination regulates the initiation of dynein-dynactin motility via interaction with DCTN1, which brings the dynein-dynactin complex into contact with microtubules. In neurons, tyrosinated tubulins mediate the initiation of retrograde vesicle transport. Detyrosination is involved in metaphase plate congression by guiding chromosomes during mitosis: detyrosination promotes interaction with CENPE, promoting pole-proximal transport of chromosomes toward the equator. Detyrosination increases microtubules-dependent mechanotransduction in dystrophic cardiac and skeletal muscle. In cardiomyocytes, detyrosinated microtubules are required to resist to contractile compression during contraction: detyrosination promotes association with desmin (DES) at force-generating sarcomeres, leading to buckled microtubules and mechanical resistance to contraction.

The protein localises to the cytoplasm. Its subcellular location is the cytoskeleton. The catalysed reaction is GTP + H2O = GDP + phosphate + H(+). In terms of biological role, tubulin is the major constituent of microtubules, a cylinder consisting of laterally associated linear protofilaments composed of alpha- and beta-tubulin heterodimers. Microtubules grow by the addition of GTP-tubulin dimers to the microtubule end, where a stabilizing cap forms. Below the cap, tubulin dimers are in GDP-bound state, owing to GTPase activity of alpha-tubulin. In Rattus norvegicus (Rat), this protein is Tubulin alpha-1C chain (Tuba1c).